A 683-amino-acid polypeptide reads, in one-letter code: MNKELASKFLSSIKHEREQDIQTTSRLLTTLSIQQLVQNGLAINNIHLENIRSGLIGKLYMELGPNLAVNDKIQRGDIKVGDIVLVRPAKTKVNTKTKPKVKKVSEDSNGEQAECSGVVYKMSDTQITIALEESQDVIATTFYSYSKLYILKTTNVVTYNRMESTMRKLSEISSPIQDKIIQYLVNERPFIPNTNSFQNIKSFLNPNLNDSQKTAINFAINNDLTIIHGPPGTGKTFTLIELIQQLLIKNPEERILICGPSNISVDTILERLTPLVPNNLLLRIGHPARLLDSNKRHSLDILSKKNTIVKDISQEIDKLIQENKKLKNYKQRKENWNEIKLLRKDLKKREFKTIKDLIIQSRIVVTTLHGSSSRELCSLYRDDPNFQLFDTLIIDEVSQAMEPQCWIPLIAHQNQFHKLVLAGDNKQLPPTIKTEDDKNVIHNLETTLFDRIIKIFPKRDMVKFLNVQYRMNQKIMEFPSHSMYNGKLLADATVANRLLIDLPTVDATPSEDDDDTKIPLIWYDTQGDEFQETADEATILGSKYNEGEIAIVKEHIENLRSFNVPENSIGVISPYNAQVSHLKKLIHDELKLTDIEISTVDGFQGREKDVIILSLVRSNEKFEVGFLKEERRLNVAMTRPRRQLVVVGNIEVLQRCGNKYLKSWSEWCEENADVRYPNIDDYL.

Residue 229 to 236 (GPPGTGKT) coordinates ATP.

The protein belongs to the DNA2/NAM7 helicase family. As to quaternary structure, associates with the hexameric DNA polymerase alpha.

Its subcellular location is the cytoplasm. It is found in the nucleus. The catalysed reaction is ATP + H2O = ADP + phosphate + H(+). In terms of biological role, DNA polymerase alpha-associated DNA helicase which may be involved in DNA replication. This is DNA polymerase alpha-associated DNA helicase A (HCS1) from Saccharomyces cerevisiae (strain ATCC 204508 / S288c) (Baker's yeast).